The following is a 185-amino-acid chain: UPF0301 protein IL2218 (185 aa).

The protein belongs to the UPF0301 (AlgH) family.

This Idiomarina loihiensis (strain ATCC BAA-735 / DSM 15497 / L2-TR) protein is UPF0301 protein IL2218.